A 381-amino-acid chain; its full sequence is Dual-specificity RNA methyltransferase RlmN (381 aa).

Glutamate 96 functions as the Proton acceptor in the catalytic mechanism. The Radical SAM core domain occupies 102 to 342 (TDDRGTLCVS…TRTTRGDDID (241 aa)). A disulfide bond links cysteine 109 and cysteine 345. [4Fe-4S] cluster contacts are provided by cysteine 116, cysteine 120, and cysteine 123. Residues 170 to 171 (GE), serine 202, 224 to 226 (SLH), and asparagine 302 contribute to the S-adenosyl-L-methionine site. The S-methylcysteine intermediate role is filled by cysteine 345.

Belongs to the radical SAM superfamily. RlmN family. [4Fe-4S] cluster is required as a cofactor.

It is found in the cytoplasm. It carries out the reaction adenosine(2503) in 23S rRNA + 2 reduced [2Fe-2S]-[ferredoxin] + 2 S-adenosyl-L-methionine = 2-methyladenosine(2503) in 23S rRNA + 5'-deoxyadenosine + L-methionine + 2 oxidized [2Fe-2S]-[ferredoxin] + S-adenosyl-L-homocysteine. The enzyme catalyses adenosine(37) in tRNA + 2 reduced [2Fe-2S]-[ferredoxin] + 2 S-adenosyl-L-methionine = 2-methyladenosine(37) in tRNA + 5'-deoxyadenosine + L-methionine + 2 oxidized [2Fe-2S]-[ferredoxin] + S-adenosyl-L-homocysteine. Its function is as follows. Specifically methylates position 2 of adenine 2503 in 23S rRNA and position 2 of adenine 37 in tRNAs. m2A2503 modification seems to play a crucial role in the proofreading step occurring at the peptidyl transferase center and thus would serve to optimize ribosomal fidelity. The protein is Dual-specificity RNA methyltransferase RlmN of Pseudomonas putida (strain ATCC 700007 / DSM 6899 / JCM 31910 / BCRC 17059 / LMG 24140 / F1).